A 154-amino-acid polypeptide reads, in one-letter code: Large ribosomal subunit protein uL13 (154 aa).

The protein belongs to the universal ribosomal protein uL13 family. In terms of assembly, part of the 50S ribosomal subunit.

In terms of biological role, this protein is one of the early assembly proteins of the 50S ribosomal subunit, although it is not seen to bind rRNA by itself. It is important during the early stages of 50S assembly. The protein is Large ribosomal subunit protein uL13 of Bartonella quintana (strain Toulouse) (Rochalimaea quintana).